Reading from the N-terminus, the 268-residue chain is Phosphatidylglycerol--prolipoprotein diacylglyceryl transferase (268 aa).

A run of 4 helical transmembrane segments spans residues 14 to 34 (LGPI…FAGW), 57 to 77 (LTFY…IIFY), 90 to 110 (FFLW…LIAF), and 117 to 137 (IGAN…IGLG). A 1,2-diacyl-sn-glycero-3-phospho-(1'-sn-glycerol) is bound at residue R140. 3 helical membrane passes run 174–194 (QLFE…LVTI), 200–220 (YLVL…CEFF), and 238–258 (GQIL…AVFI).

The protein belongs to the Lgt family.

Its subcellular location is the cell inner membrane. It carries out the reaction L-cysteinyl-[prolipoprotein] + a 1,2-diacyl-sn-glycero-3-phospho-(1'-sn-glycerol) = an S-1,2-diacyl-sn-glyceryl-L-cysteinyl-[prolipoprotein] + sn-glycerol 1-phosphate + H(+). Its pathway is protein modification; lipoprotein biosynthesis (diacylglyceryl transfer). In terms of biological role, catalyzes the transfer of the diacylglyceryl group from phosphatidylglycerol to the sulfhydryl group of the N-terminal cysteine of a prolipoprotein, the first step in the formation of mature lipoproteins. This chain is Phosphatidylglycerol--prolipoprotein diacylglyceryl transferase, found in Francisella tularensis subsp. holarctica (strain FTNF002-00 / FTA).